Reading from the N-terminus, the 187-residue chain is UPF0301 protein CT0663 (187 aa).

Belongs to the UPF0301 (AlgH) family.

In Chlorobaculum tepidum (strain ATCC 49652 / DSM 12025 / NBRC 103806 / TLS) (Chlorobium tepidum), this protein is UPF0301 protein CT0663.